Consider the following 63-residue polypeptide: Cytochrome c oxidase subunit 7C, mitochondrial (63 aa).

The transit peptide at 1–16 (MLGQSIRRFTTSVVRR) directs the protein to the mitochondrion. Residues 17-33 (SHYEEGPGKNLPFSVEN) lie on the Mitochondrial matrix side of the membrane. Lys25 carries the post-translational modification N6-acetyllysine; alternate. Lys25 carries the post-translational modification N6-succinyllysine; alternate. A helical membrane pass occupies residues 34–60 (KWRLLAMMTLYFGSGFAAPFFIVRHQL). Topologically, residues 61–63 (LKK) are mitochondrial intermembrane.

It belongs to the cytochrome c oxidase VIIc family. In terms of assembly, component of the cytochrome c oxidase (complex IV, CIV), a multisubunit enzyme composed of 14 subunits. The complex is composed of a catalytic core of 3 subunits MT-CO1, MT-CO2 and MT-CO3, encoded in the mitochondrial DNA, and 11 supernumerary subunits COX4I, COX5A, COX5B, COX6A, COX6B, COX6C, COX7A, COX7B, COX7C, COX8 and NDUFA4, which are encoded in the nuclear genome. The complex exists as a monomer or a dimer and forms supercomplexes (SCs) in the inner mitochondrial membrane with NADH-ubiquinone oxidoreductase (complex I, CI) and ubiquinol-cytochrome c oxidoreductase (cytochrome b-c1 complex, complex III, CIII), resulting in different assemblies (supercomplex SCI(1)III(2)IV(1) and megacomplex MCI(2)III(2)IV(2)). Interacts with RAB5IF.

Its subcellular location is the mitochondrion inner membrane. The protein operates within energy metabolism; oxidative phosphorylation. Component of the cytochrome c oxidase, the last enzyme in the mitochondrial electron transport chain which drives oxidative phosphorylation. The respiratory chain contains 3 multisubunit complexes succinate dehydrogenase (complex II, CII), ubiquinol-cytochrome c oxidoreductase (cytochrome b-c1 complex, complex III, CIII) and cytochrome c oxidase (complex IV, CIV), that cooperate to transfer electrons derived from NADH and succinate to molecular oxygen, creating an electrochemical gradient over the inner membrane that drives transmembrane transport and the ATP synthase. Cytochrome c oxidase is the component of the respiratory chain that catalyzes the reduction of oxygen to water. Electrons originating from reduced cytochrome c in the intermembrane space (IMS) are transferred via the dinuclear copper A center (CU(A)) of subunit 2 and heme A of subunit 1 to the active site in subunit 1, a binuclear center (BNC) formed by heme A3 and copper B (CU(B)). The BNC reduces molecular oxygen to 2 water molecules using 4 electrons from cytochrome c in the IMS and 4 protons from the mitochondrial matrix. This is Cytochrome c oxidase subunit 7C, mitochondrial (COX7C) from Sus scrofa (Pig).